The sequence spans 103 residues: N(4)-acetylcytidine amidohydrolase (103 aa).

Residues 6–100 (ITFFQRFQED…AEDRFYVIEF (95 aa)) form the ASCH domain. Lys21 acts as the Proton acceptor in catalysis. Residue Thr24 is the Nucleophile of the active site. Catalysis depends on Glu74, which acts as the Proton donor.

Belongs to the N(4)-acetylcytidine amidohydrolase family.

The enzyme catalyses N(4)-acetylcytidine + H2O = cytidine + acetate + H(+). It carries out the reaction N(4)-acetyl-2'-deoxycytidine + H2O = 2'-deoxycytidine + acetate + H(+). The catalysed reaction is N(4)-acetylcytosine + H2O = cytosine + acetate + H(+). Catalyzes the hydrolysis of N(4)-acetylcytidine (ac4C). The protein is N(4)-acetylcytidine amidohydrolase of Klebsiella pneumoniae (strain 342).